Reading from the N-terminus, the 331-residue chain is 2-keto-3-deoxygluconate permease (331 aa).

A run of 10 helical transmembrane segments spans residues 10 to 30 (IPGG…TLAP), 42 to 62 (GMIS…GASI), 77 to 97 (LVLT…MFIP), 100 to 120 (GIQT…AMDM), 141 to 161 (AFVL…LGSA), 163 to 183 (LASF…IGFA), 200 to 220 (PVLI…NVIM), 224 to 244 (LLGI…LIIA), 254 to 274 (TAGV…MIIA), and 289 to 309 (ALVA…TALY).

Belongs to the KdgT transporter family.

Its subcellular location is the cell inner membrane. The enzyme catalyses 2-dehydro-3-deoxy-D-gluconate(in) + H(+)(in) = 2-dehydro-3-deoxy-D-gluconate(out) + H(+)(out). Catalyzes the proton-dependent uptake of 2-keto-3-deoxygluconate (KDG) into the cell. The chain is 2-keto-3-deoxygluconate permease from Enterobacter sp. (strain 638).